Here is a 305-residue protein sequence, read N- to C-terminus: MSKKLTFQEIILTLQQFWNDQGCMLMQAYDNEKGAGTMSPYTFLRAIGPEPWNAAYVEPSRRPADGRYGENPNRLYQHHQFQVVMKPSPSNIQELYLESLEKLGINPLEHDIRFVEDNWENPSTGSAGLGWEVWLDGMEITQFTYFQQVGGLATGPVTAEVTYGLERLASYIQEVDSIYDIEWADGVKYGEIFIQPEYEHSKYSFEISDQEMLLENFDKFEKEAGRALEEGLVHPAYDYVLKCSHTFNLLDARGAVSVTERAGYIARIRNLARVVAKTFVAERKRLGYPLLDEETRVKLLAEDAE.

Belongs to the class-II aminoacyl-tRNA synthetase family. In terms of assembly, tetramer of two alpha and two beta subunits.

The protein resides in the cytoplasm. It carries out the reaction tRNA(Gly) + glycine + ATP = glycyl-tRNA(Gly) + AMP + diphosphate. The protein is Glycine--tRNA ligase alpha subunit of Streptococcus pneumoniae (strain ATCC BAA-255 / R6).